Reading from the N-terminus, the 162-residue chain is UPF0114 protein Psyr_4257 (162 aa).

A run of 4 helical transmembrane segments spans residues 15–35, 53–73, 109–129, and 136–156; these read LLAP…LKFF, LILV…LVMV, VAAS…MDAT, and LMWY…MGYL.

Belongs to the UPF0114 family.

Its subcellular location is the cell membrane. This is UPF0114 protein Psyr_4257 from Pseudomonas syringae pv. syringae (strain B728a).